We begin with the raw amino-acid sequence, 332 residues long: Beta-1,3-N-acetylglucosaminyltransferase radical fringe (332 aa).

The Cytoplasmic portion of the chain corresponds to 1–6 (MSRARR). A helical; Signal-anchor for type II membrane protein transmembrane segment spans residues 7-29 (VLCRACLALAAVLAVLLLLPLPL). At 30–332 (PLPLPRAPAP…MKNRVEGAFQ (303 aa)) the chain is on the lumenal side. Substrate is bound at residue Arg-75. A glycan (N-linked (GlcNAc...) asparagine) is linked at Asn-114. Disulfide bonds link Cys-115-Cys-126 and Cys-144-Cys-208. Substrate is bound at residue Asp-148. Asp-149 is a binding site for Mn(2+). The active site involves Asp-238. Residue His-262 participates in Mn(2+) binding. Cys-312 and Cys-321 are joined by a disulfide.

Belongs to the glycosyltransferase 31 family. Mn(2+) serves as cofactor. As to expression, detected in all the examined tissues (12.5 dpc). High expression found in adult brain.

The protein localises to the golgi apparatus membrane. It catalyses the reaction 3-O-(alpha-L-fucosyl)-L-threonyl-[EGF-like domain protein] + UDP-N-acetyl-alpha-D-glucosamine = 3-O-(N-acetyl-beta-D-glucosaminyl-(1-&gt;3)-alpha-L-fucosyl)-L-threonyl-[EGF-like domain protein] + UDP + H(+). The enzyme catalyses 3-O-(alpha-L-fucosyl)-L-seryl-[EGF-like domain protein] + UDP-N-acetyl-alpha-D-glucosamine = 3-O-(N-acetyl-beta-D-glucosaminyl-(1-&gt;3)-alpha-L-fucosyl)-L-seryl-[EGF-like domain protein] + UDP + H(+). Functionally, glycosyltransferase that initiates the elongation of O-linked fucose residues attached to EGF-like repeats in the extracellular domain of Notch molecules. Modulates NOTCH1 activity by modifying O-fucose residues at specific EGF-like domains resulting in enhancement of NOTCH1 activation by DLL1 and JAG1. May be involved in limb formation and in neurogenesis. This is Beta-1,3-N-acetylglucosaminyltransferase radical fringe from Mus musculus (Mouse).